Here is a 243-residue protein sequence, read N- to C-terminus: MVMNPTSFEQQQTEKLLNPMGRSQVTQDLSENVILTTVDDLYNWARLSSLWPLLYGTACCFIEFAALLGSRFDFDRFGLVPRSSPRQADLILVAGTVTMKMAPALVRLYEEMPEPKYVIAMGACTITGGMFSSDSTTAVRGVDKLIPVDLYIPGCPPRPEAIIDAIIKLRKKVSNETIQERSLKTEQTHRYYSTAHSMKVVEPILTGKYLGMDTWNNPPKELTEAMGMPVPPALLTAKQREEA.

[4Fe-4S] cluster-binding residues include C59, C60, C124, and C155.

Belongs to the complex I 20 kDa subunit family. NDH-1 can be composed of about 15 different subunits; different subcomplexes with different compositions have been identified which probably have different functions. Requires [4Fe-4S] cluster as cofactor.

Its subcellular location is the cellular thylakoid membrane. It catalyses the reaction a plastoquinone + NADH + (n+1) H(+)(in) = a plastoquinol + NAD(+) + n H(+)(out). The enzyme catalyses a plastoquinone + NADPH + (n+1) H(+)(in) = a plastoquinol + NADP(+) + n H(+)(out). NDH-1 shuttles electrons from an unknown electron donor, via FMN and iron-sulfur (Fe-S) centers, to quinones in the respiratory and/or the photosynthetic chain. The immediate electron acceptor for the enzyme in this species is believed to be plastoquinone. Couples the redox reaction to proton translocation, and thus conserves the redox energy in a proton gradient. Cyanobacterial NDH-1 also plays a role in inorganic carbon-concentration. This is NAD(P)H-quinone oxidoreductase subunit K from Picosynechococcus sp. (strain ATCC 27264 / PCC 7002 / PR-6) (Agmenellum quadruplicatum).